The primary structure comprises 200 residues: GTP cyclohydrolase-2 (200 aa).

50–54 (RIHSE) contributes to the GTP binding site. Cysteine 55, cysteine 66, and cysteine 68 together coordinate Zn(2+). Residues glutamine 71, 93-95 (EGR), and threonine 115 contribute to the GTP site. Aspartate 127 functions as the Proton acceptor in the catalytic mechanism. Arginine 129 serves as the catalytic Nucleophile. GTP is bound by residues threonine 150 and lysine 155.

The protein belongs to the GTP cyclohydrolase II family. The cofactor is Zn(2+).

It catalyses the reaction GTP + 4 H2O = 2,5-diamino-6-hydroxy-4-(5-phosphoribosylamino)-pyrimidine + formate + 2 phosphate + 3 H(+). The protein operates within cofactor biosynthesis; riboflavin biosynthesis; 5-amino-6-(D-ribitylamino)uracil from GTP: step 1/4. Functionally, catalyzes the conversion of GTP to 2,5-diamino-6-ribosylamino-4(3H)-pyrimidinone 5'-phosphate (DARP), formate and pyrophosphate. The protein is GTP cyclohydrolase-2 of Acinetobacter baylyi (strain ATCC 33305 / BD413 / ADP1).